Here is a 153-residue protein sequence, read N- to C-terminus: SsrA-binding protein (153 aa).

Belongs to the SmpB family.

It localises to the cytoplasm. Functionally, required for rescue of stalled ribosomes mediated by trans-translation. Binds to transfer-messenger RNA (tmRNA), required for stable association of tmRNA with ribosomes. tmRNA and SmpB together mimic tRNA shape, replacing the anticodon stem-loop with SmpB. tmRNA is encoded by the ssrA gene; the 2 termini fold to resemble tRNA(Ala) and it encodes a 'tag peptide', a short internal open reading frame. During trans-translation Ala-aminoacylated tmRNA acts like a tRNA, entering the A-site of stalled ribosomes, displacing the stalled mRNA. The ribosome then switches to translate the ORF on the tmRNA; the nascent peptide is terminated with the 'tag peptide' encoded by the tmRNA and targeted for degradation. The ribosome is freed to recommence translation, which seems to be the essential function of trans-translation. The sequence is that of SsrA-binding protein from Macrococcus caseolyticus (strain JCSC5402) (Macrococcoides caseolyticum).